The chain runs to 390 residues: tRNA (guanine(26)-N(2))-dimethyltransferase (390 aa).

Residues H4–I378 form the Trm1 methyltransferase domain. S-adenosyl-L-methionine is bound by residues R37, R67, D85, D112, and A113. Residues C245, C248, C265, and C268 each coordinate Zn(2+).

This sequence belongs to the class I-like SAM-binding methyltransferase superfamily. Trm1 family.

The catalysed reaction is guanosine(26) in tRNA + 2 S-adenosyl-L-methionine = N(2)-dimethylguanosine(26) in tRNA + 2 S-adenosyl-L-homocysteine + 2 H(+). In terms of biological role, dimethylates a single guanine residue at position 26 of a number of tRNAs using S-adenosyl-L-methionine as donor of the methyl groups. The protein is tRNA (guanine(26)-N(2))-dimethyltransferase of Methanosphaera stadtmanae (strain ATCC 43021 / DSM 3091 / JCM 11832 / MCB-3).